We begin with the raw amino-acid sequence, 887 residues long: Tiger protein O1 (887 aa).

An N-terminal signal peptide occupies residues 1–21; the sequence is MEKKLLIIVIVFLFSTIQVFC. Topologically, residues 22–845 are extracellular; sequence RIDDKTFVIS…SLSKKSIILL (824 aa). Residues Asn32, Asn70, Asn186, Asn207, Asn219, Asn259, Asn297, Asn314, Asn325, Asn338, Asn354, Asn393, Asn431, Asn588, Asn629, Asn652, Asn687, Asn710, Asn720, Asn730, Asn775, Asn788, Asn811, and Asn816 are each glycosylated (N-linked (GlcNAc...) asparagine). Positions 277-365 constitute an IPT/TIG 1 domain; it reads NSVPYSKGGL…TNENKLLFNY (89 aa). Residues 710-767 form the IPT/TIG 2 domain; sequence NTSSINVNGGNLTIYGKNFYNVSNIKVEVDNQLKCNKIEFINLNSLTCFLPPFIETLF. Positions 811-835 are disordered; it reads NDTSENSTNDILNHEKNNNNQKDGS. The chain crosses the membrane as a helical span at residues 846–866; the sequence is SILLPSFIILIVSLAIVILVI. At 867 to 887 the chain is on the cytoplasmic side; it reads KRNKTKHSKNMSSKEKELMKQ.

It is found in the membrane. This Dictyostelium discoideum (Social amoeba) protein is Tiger protein O1 (tgrO1).